Here is a 234-residue protein sequence, read N- to C-terminus: MAAKIFCLLMLLGLSASAATATIFPQCSQAPIASLLPPYLSPAVSSVCENPILQPYRIQQAIAAGILPLSPLFLQQSSALLQQLPLVHLLAQNIRAQQLQQLVLANLAAYSQQQQFLPFNQLAALNSASYLQQQQLPFSQLPAAYPQQFLPFNQLAALNSPAYLQQQQLLPFSQLAGVSPATFLTQPQLLPFYQHAAPNAGTLLQLQQLLPFNQLALTNLAAFYQQPIIGGALF.

Positions 1–21 (MAAKIFCLLMLLGLSASAATA) are cleaved as a signal peptide.

Belongs to the zein family.

Zeins are major seed storage proteins. The protein is Zein-alpha A30 of Zea mays (Maize).